Reading from the N-terminus, the 337-residue chain is ATP-dependent 6-phosphofructokinase (337 aa).

Position 11 (Gly11) interacts with ATP. Residue 21-25 (RAVVR) participates in ADP binding. ATP contacts are provided by residues 72-73 (RY) and 102-105 (GDGS). Position 103 (Asp103) interacts with Mg(2+). 125-127 (TID) is a substrate binding site. Asp127 functions as the Proton acceptor in the catalytic mechanism. Arg154 provides a ligand contact to ADP. Substrate contacts are provided by residues Arg162 and 169-171 (MGR). Residues 185 to 187 (GAD), Arg212, and 214 to 216 (KNH) contribute to the ADP site. Substrate is bound by residues Glu223, Arg245, and 251-254 (HILR).

The protein belongs to the phosphofructokinase type A (PFKA) family. ATP-dependent PFK group I subfamily. Prokaryotic clade 'B1' sub-subfamily. As to quaternary structure, homotetramer. Mg(2+) is required as a cofactor.

The protein localises to the cytoplasm. It catalyses the reaction beta-D-fructose 6-phosphate + ATP = beta-D-fructose 1,6-bisphosphate + ADP + H(+). Its pathway is carbohydrate degradation; glycolysis; D-glyceraldehyde 3-phosphate and glycerone phosphate from D-glucose: step 3/4. Its activity is regulated as follows. Allosterically activated by ADP and other diphosphonucleosides, and allosterically inhibited by phosphoenolpyruvate. Its function is as follows. Catalyzes the phosphorylation of D-fructose 6-phosphate to fructose 1,6-bisphosphate by ATP, the first committing step of glycolysis. This Streptococcus equi subsp. equi (strain 4047) protein is ATP-dependent 6-phosphofructokinase.